We begin with the raw amino-acid sequence, 138 residues long: Dehydratase iacD (138 aa).

The EthD domain occupies 18–113 (GVSEEDFIEW…LKDQDVWMDN (96 aa)).

The protein belongs to the tpcK family.

It functions in the pathway secondary metabolite biosynthesis. Its function is as follows. Dehydratase; part of the gene cluster that mediates the biosynthesis of iso-A82775C, a enylepoxycyclohexane and biosynthetic precursor of the chloropestolide anticancer natural products. Within the cluster, the prenyltransferase iacE prenylates siccayne to generate pestalodiol E, using dimethylallyl diphosphate (DMAPP) as cosubstrate. The probable oxidoreductase iacF is then involved in the epoxidation of pestalodiol F to pestalodiol F, which is further converted to pestalofone A by the short-chain dehydrogenase/reductase iacG. Iso-A82775C is subsequently generated from pestalofone A by the short-chain dehydrogenase/reductase iacC. Iso-A82775C is further condensed with maldoxin via a Diels-Alder reaction to produce the anticancer natural products chloropestolides A to E. The polypeptide is Dehydratase iacD (Pestalotiopsis fici (strain W106-1 / CGMCC3.15140)).